Here is a 450-residue protein sequence, read N- to C-terminus: Regulator of sigma-E protease RseP (450 aa).

Residues 1–21 (MLSFLWDLASFIVALGVLITV) form a helical membrane-spanning segment. His-22 is a Zn(2+) binding site. The Periplasmic segment spans residues 22–103 (HEFGHFWVAR…VGQRAAIIAA (82 aa)). Glu-23 is a catalytic residue. Residue His-26 coordinates Zn(2+). Residues 104 to 124 (GPVANFIFAIFAYWLVFIIGV) form a helical membrane-spanning segment. Topologically, residues 125-375 (PGVRPVVGEI…KGAGMTAELG (251 aa)) are cytoplasmic. PDZ domains lie at 127–220 (VRPV…PRGP) and 222–309 (IEPV…PKVI). Residues 376 to 396 (VVYYLPFLALISVNLGIINLF) form a helical membrane-spanning segment. Residues 397–429 (PLPVLDGGHLLFLAIEKIKGGPVSERVQDFCYR) lie on the Periplasmic side of the membrane. The helical transmembrane segment at 430–450 (IGSILLVLLMGLALFNDFSRL) threads the bilayer.

It belongs to the peptidase M50B family. In terms of assembly, interacts with RseA; the third transmembrane domain can be cross-linked to the transmembrane domain of RseA. The cofactor is Zn(2+).

The protein resides in the cell inner membrane. With respect to regulation, inhibited by Zn(2+) chelator 1,10-phenanthroline. A site-2 regulated intramembrane protease (S2P) that cleaves the peptide bond between 'Ala-108' and 'Cys-109' in the transmembrane region of RseA. Part of a regulated intramembrane proteolysis (RIP) cascade. Acts on DegS-cleaved RseA to release the cytoplasmic domain of RseA, residue 'Val-148' of RseA may be required for this. This provides the cell with sigma-E (RpoE) activity through the proteolysis of RseA. Can also cleave sequences in transmembrane regions of other proteins (such as LacY) as well as liberated signal peptides of beta-lactamase, OmpF, LivK, SecM, PhoA, LivJ, OmpC, Lpp and TorA, probably within the membrane. Cleaves FecR within its transmembrane region to release an N-terminal cytoplasmic fragment which binds to sigma factor FecI, allowing it to activate transcription of the fecABCDE operon which mediates ferric citrate transport. The sequence is that of Regulator of sigma-E protease RseP (rseP) from Escherichia coli (strain K12).